The chain runs to 554 residues: CTP synthase (554 aa).

Residues Met1–Leu279 are amidoligase domain. Ser21 contributes to the CTP binding site. Residue Ser21 participates in UTP binding. ATP-binding positions include Ser22–Leu27 and Asp79. Asp79 and Glu153 together coordinate Mg(2+). CTP is bound by residues Asp160–Glu162, Lys200–Gln205, and Lys236. Residues Lys200 to Gln205 and Lys236 contribute to the UTP site. Residues Thr304 to His553 form the Glutamine amidotransferase type-1 domain. Gly367 contacts L-glutamine. Cys394 serves as the catalytic Nucleophile; for glutamine hydrolysis. L-glutamine contacts are provided by residues Leu395 to Gln398, Glu417, and Arg478. Residues His526 and Glu528 contribute to the active site.

This sequence belongs to the CTP synthase family. As to quaternary structure, homotetramer.

It catalyses the reaction UTP + L-glutamine + ATP + H2O = CTP + L-glutamate + ADP + phosphate + 2 H(+). It carries out the reaction L-glutamine + H2O = L-glutamate + NH4(+). The catalysed reaction is UTP + NH4(+) + ATP = CTP + ADP + phosphate + 2 H(+). The protein operates within pyrimidine metabolism; CTP biosynthesis via de novo pathway; CTP from UDP: step 2/2. Allosterically activated by GTP, when glutamine is the substrate; GTP has no effect on the reaction when ammonia is the substrate. The allosteric effector GTP functions by stabilizing the protein conformation that binds the tetrahedral intermediate(s) formed during glutamine hydrolysis. Inhibited by the product CTP, via allosteric rather than competitive inhibition. Catalyzes the ATP-dependent amination of UTP to CTP with either L-glutamine or ammonia as the source of nitrogen. Regulates intracellular CTP levels through interactions with the four ribonucleotide triphosphates. The protein is CTP synthase of Corynebacterium glutamicum (strain R).